The primary structure comprises 402 residues: Serine/threonine-protein phosphatase 4 regulatory subunit 2 (402 aa).

Over residues 206–248 the composition is skewed to acidic residues; the sequence is MDEEFEDEDYEDHEDEEEDEEDEDNDSDVDEMEAEEVEEDASD. Disordered stretches follow at residues 206-270, 291-311, and 331-402; these read MDEE…DVTD, SVLSVSSHAANEDENESILSR, and GFIT…KKRM. A compositionally biased stretch (low complexity) spans 348-358; it reads SSSSMVSPVVS. Polar residues predominate over residues 371-396; that stretch reads INTFISPDTTNSVTQAEKNELSTSPL.

The protein belongs to the PPP4R2 family. Regulatory subunit (R2) of the histone H2A phosphatase complex (HTP-C) consisting of PPH3, PSY2 and PSY4.

It localises to the nucleus. Regulatory subunit of the histone H2A phosphatase complex, which dephosphorylates H2AS128ph (gamma-H2A) that has been displaced from sites of DNA lesions in the double-stranded DNA break repair process. Dephosphorylation is necessary for efficient recovery from the DNA damage checkpoint. This is Serine/threonine-protein phosphatase 4 regulatory subunit 2 (PSY4) from Kluyveromyces lactis (strain ATCC 8585 / CBS 2359 / DSM 70799 / NBRC 1267 / NRRL Y-1140 / WM37) (Yeast).